A 525-amino-acid chain; its full sequence is Putative ankyrin repeat protein FPV228 (525 aa).

ANK repeat units follow at residues 39-71 (HPDN…TRDI), 72-122 (LGNT…ACNN), 123-152 (LNQT…KVNI), 156-185 (YGNT…DVNI), 190-226 (YWYS…TRCR), 227-254 (LNTT…DINA), 258-287 (NDNA…DVNM), 291-320 (RGKT…NPNI), and 324-353 (IMNT…DINH).

The chain is Putative ankyrin repeat protein FPV228 from Fowlpox virus (strain NVSL) (FPV).